Reading from the N-terminus, the 176-residue chain is Ribosome maturation factor RimM (176 aa).

The PRC barrel domain maps to glutamate 97 to phenylalanine 176.

The protein belongs to the RimM family. Binds ribosomal protein uS19.

The protein localises to the cytoplasm. Functionally, an accessory protein needed during the final step in the assembly of 30S ribosomal subunit, possibly for assembly of the head region. Essential for efficient processing of 16S rRNA. May be needed both before and after RbfA during the maturation of 16S rRNA. It has affinity for free ribosomal 30S subunits but not for 70S ribosomes. This Colwellia psychrerythraea (strain 34H / ATCC BAA-681) (Vibrio psychroerythus) protein is Ribosome maturation factor RimM.